Consider the following 301-residue polypeptide: MTVQRILIVAGTHGNEINPIWAVKQFNRNENSLKHGIEYEYIIGNPIAYEKGCRYIDADLNRSFKKSKNYDQNENSFYEISRANFLVDQFGINGSKPCQIAIDLHTTTANMGTSIVMYGRRFKDFCLAALLQNKFGLPIYLHEKDKSQTGFLVEAWPCGLVIEIGAVAQNFYDPKIINRFLIIISSLRDEIDKLKKNLIELPKDLVVHVHQGSVDYPRDEKGDIDGLIHPKRINRDWKMIKKGDPLFLNSQGIIYKYDGDQFIWPVFIGEVAYKEKQIAMSYTNKEVICSKNEWVQEFHRL.

Positions 13 and 16 each coordinate Zn(2+). Residues arginine 54 and 61–62 each bind substrate; that span reads NR. A Zn(2+)-binding site is contributed by histidine 105. Glutamate 163 and tyrosine 273 together coordinate substrate.

Belongs to the AspA/AstE family. Aspartoacylase subfamily. Requires Zn(2+) as cofactor.

The catalysed reaction is an N-acyl-L-aspartate + H2O = a carboxylate + L-aspartate. This chain is Probable aspartoacylase, found in Prochlorococcus marinus (strain MIT 9312).